A 448-amino-acid chain; its full sequence is Tapasin (448 aa).

The N-terminal stretch at 1 to 20 (MKSLSLLLAVALGLATAVSA) is a signal peptide. At 21-414 (GPAVIECWFV…LSGPSLEDSI (394 aa)) the chain is on the lumenal side. Residues Cys27 and Cys91 are joined by a disulfide bond. Residue Asn253 is glycosylated (N-linked (GlcNAc...) asparagine). Residues 292-399 (PKVSLMPATL…PASGRSAEVT (108 aa)) enclose the Ig-like C1-type domain. Cysteines 315 and 382 form a disulfide. Residues 415–435 (GLFLSAFFLLGLFKALGWAAV) form a helical membrane-spanning segment. The Cytoplasmic segment spans residues 436–448 (YLSTCKDSKKKAE).

As to quaternary structure, heterodimer with PDIA3; disulfide-linked. Obligatory mediator for the interaction between newly assembled MHC class I molecules, calreticulin, PDIA3 and TAP. Up to 4 MHC class I/tapasin complexes bind to 1 TAP. Interacts with HLA-G-B2M complex; this interaction is required for loading of high affinity peptides. On its own or as part of MHC class I peptide loading complex, interacts with ligand-free MR1 or MR1-B2M complex, providing for stable MR1 pools ready for metabolite antigen processing.

The protein localises to the endoplasmic reticulum membrane. Its function is as follows. Involved in the association of MHC class I with transporter associated with antigen processing (TAP) and in the assembly of MHC class I with peptide (peptide loading). The sequence is that of Tapasin (TAPBP) from Chlorocebus aethiops (Green monkey).